A 104-amino-acid polypeptide reads, in one-letter code: Type IV secretion system protein PtlB homolog (104 aa).

Residues 30–50 (IALLGIWFSIAFLALFPVALL) form a helical membrane-spanning segment.

It belongs to the virB3 family.

It is found in the cell membrane. In Bordetella parapertussis (strain 12822 / ATCC BAA-587 / NCTC 13253), this protein is Type IV secretion system protein PtlB homolog (ptlB).